Here is a 253-residue protein sequence, read N- to C-terminus: Tryptophan synthase alpha chain (253 aa).

Residues E47 and D58 each act as proton acceptor in the active site.

Belongs to the TrpA family. Tetramer of two alpha and two beta chains.

It carries out the reaction (1S,2R)-1-C-(indol-3-yl)glycerol 3-phosphate + L-serine = D-glyceraldehyde 3-phosphate + L-tryptophan + H2O. It participates in amino-acid biosynthesis; L-tryptophan biosynthesis; L-tryptophan from chorismate: step 5/5. In terms of biological role, the alpha subunit is responsible for the aldol cleavage of indoleglycerol phosphate to indole and glyceraldehyde 3-phosphate. This chain is Tryptophan synthase alpha chain, found in Desulforapulum autotrophicum (strain ATCC 43914 / DSM 3382 / VKM B-1955 / HRM2) (Desulfobacterium autotrophicum).